The following is a 222-amino-acid chain: N-(5'-phosphoribosyl)anthranilate isomerase (222 aa).

This sequence belongs to the TrpF family.

The enzyme catalyses N-(5-phospho-beta-D-ribosyl)anthranilate = 1-(2-carboxyphenylamino)-1-deoxy-D-ribulose 5-phosphate. Its pathway is amino-acid biosynthesis; L-tryptophan biosynthesis; L-tryptophan from chorismate: step 3/5. The chain is N-(5'-phosphoribosyl)anthranilate isomerase from Prosthecochloris aestuarii (strain DSM 271 / SK 413).